Reading from the N-terminus, the 184-residue chain is MDISAGIQASLAGRYASALFELAAEEGVVTAVESDLDKLHAALGESDDLKAVTNNPEISRKDQASAIEGVAGVLGLSPLTTKFLGTLAANRRLSKLGDMIRAFRTIAAAQRGEVTADVVSAHPLKDDQLESLKTKLTAREGRTVKLSPTVDPDLLGGLVVTIGSKRIDGSIRTRLNTLANAMKG.

This sequence belongs to the ATPase delta chain family. F-type ATPases have 2 components, F(1) - the catalytic core - and F(0) - the membrane proton channel. F(1) has five subunits: alpha(3), beta(3), gamma(1), delta(1), epsilon(1). CF(0) has four main subunits: a(1), b(1), b'(1) and c(10-14). The alpha and beta chains form an alternating ring which encloses part of the gamma chain. F(1) is attached to F(0) by a central stalk formed by the gamma and epsilon chains, while a peripheral stalk is formed by the delta, b and b' chains.

The protein resides in the cell inner membrane. F(1)F(0) ATP synthase produces ATP from ADP in the presence of a proton or sodium gradient. F-type ATPases consist of two structural domains, F(1) containing the extramembraneous catalytic core and F(0) containing the membrane proton channel, linked together by a central stalk and a peripheral stalk. During catalysis, ATP synthesis in the catalytic domain of F(1) is coupled via a rotary mechanism of the central stalk subunits to proton translocation. Its function is as follows. This protein is part of the stalk that links CF(0) to CF(1). It either transmits conformational changes from CF(0) to CF(1) or is implicated in proton conduction. This chain is ATP synthase subunit delta, found in Erythrobacter litoralis (strain HTCC2594).